Consider the following 185-residue polypeptide: MPFYEIFIISVALAMDAFTIAVACGLCMPEVSKRQNFRLSFHFGLFQALMPLLGWLAGLTVKSMVETYAPWISFFLLAFVGGKMIQESFETDDSCDTYKDPTKGLSLVFLSVATSLDALAVGLSFSIMDYPIAFPCVMIGITALVLTSFGLWLGKSFAKASSYSHIAERIGGVVLILIGLKLLLQ.

6 helical membrane passes run 6–26 (IFII…ACGL), 41–61 (FHFG…GLTV), 65–85 (VETY…GKMI), 107–127 (LVFL…SFSI), 132–152 (IAFP…FGLW), and 164–184 (SHIA…KLLL).

It belongs to the MntP (TC 9.B.29) family.

The protein resides in the cell inner membrane. Probably functions as a manganese efflux pump. This chain is Putative manganese efflux pump MntP, found in Maridesulfovibrio salexigens (strain ATCC 14822 / DSM 2638 / NCIMB 8403 / VKM B-1763) (Desulfovibrio salexigens).